A 214-amino-acid chain; its full sequence is Thiamine-phosphate synthase (214 aa).

4-amino-2-methyl-5-(diphosphooxymethyl)pyrimidine contacts are provided by residues 37–41 and Asn-73; that span reads QYREK. Asp-74 and Asp-93 together coordinate Mg(2+). Ser-112 is a 4-amino-2-methyl-5-(diphosphooxymethyl)pyrimidine binding site. Residue 139 to 141 coordinates 2-[(2R,5Z)-2-carboxy-4-methylthiazol-5(2H)-ylidene]ethyl phosphate; it reads TIS. Residue Lys-142 coordinates 4-amino-2-methyl-5-(diphosphooxymethyl)pyrimidine. Residues Gly-171 and 191 to 192 contribute to the 2-[(2R,5Z)-2-carboxy-4-methylthiazol-5(2H)-ylidene]ethyl phosphate site; that span reads IS.

This sequence belongs to the thiamine-phosphate synthase family. It depends on Mg(2+) as a cofactor.

The enzyme catalyses 2-[(2R,5Z)-2-carboxy-4-methylthiazol-5(2H)-ylidene]ethyl phosphate + 4-amino-2-methyl-5-(diphosphooxymethyl)pyrimidine + 2 H(+) = thiamine phosphate + CO2 + diphosphate. The catalysed reaction is 2-(2-carboxy-4-methylthiazol-5-yl)ethyl phosphate + 4-amino-2-methyl-5-(diphosphooxymethyl)pyrimidine + 2 H(+) = thiamine phosphate + CO2 + diphosphate. It carries out the reaction 4-methyl-5-(2-phosphooxyethyl)-thiazole + 4-amino-2-methyl-5-(diphosphooxymethyl)pyrimidine + H(+) = thiamine phosphate + diphosphate. It participates in cofactor biosynthesis; thiamine diphosphate biosynthesis; thiamine phosphate from 4-amino-2-methyl-5-diphosphomethylpyrimidine and 4-methyl-5-(2-phosphoethyl)-thiazole: step 1/1. Condenses 4-methyl-5-(beta-hydroxyethyl)thiazole monophosphate (THZ-P) and 2-methyl-4-amino-5-hydroxymethyl pyrimidine pyrophosphate (HMP-PP) to form thiamine monophosphate (TMP). This is Thiamine-phosphate synthase from Listeria monocytogenes serotype 4a (strain HCC23).